The sequence spans 157 residues: UPF0251 protein CLD_3165 (157 aa).

This sequence belongs to the UPF0251 family.

The chain is UPF0251 protein CLD_3165 from Clostridium botulinum (strain Okra / Type B1).